We begin with the raw amino-acid sequence, 137 residues long: Histone H2B.1, sperm (137 aa).

A disordered region spans residues 1–43; it reads MPSQKSPTKRSPTKRSPQKGGKGAKRGGKAGKRRRGVAVKRRR. 3 short sequence motifs (SPKK motif) span residues 6–9, 11–14, and 16–19; these read SPTK and SPQK. Residues 7–43 are compositionally biased toward basic residues; it reads PTKRSPTKRSPQKGGKGAKRGGKAGKRRRGVAVKRRR. Phosphoserine occurs at positions 11 and 16. A glycan (O-linked (GlcNAc) serine) is linked at S124. A Glycyl lysine isopeptide (Lys-Gly) (interchain with G-Cter in ubiquitin) cross-link involves residue K132.

This sequence belongs to the histone H2B family. As to quaternary structure, the nucleosome is a histone octamer containing two molecules each of H2A, H2B, H3 and H4 assembled in one H3-H4 heterotetramer and two H2A-H2B heterodimers. The octamer wraps approximately 147 bp of DNA. In terms of processing, monoubiquitination of Lys-132 gives a specific tag for epigenetic transcriptional activation and is also prerequisite for histone H3 'Lys-4' and 'Lys-79' methylation. Post-translationally, phosphorylated on SPKK motifs 2 and 3; which may regulate DNA binding. Dephosphorylated during maturation of spermatids to mature sperm and rephosphorylated at fertilization. GlcNAcylation at Ser-124 promotes monoubiquitination of Lys-132. It fluctuates in response to extracellular glucose, and associates with transcribed genes.

It localises to the nucleus. Its subcellular location is the chromosome. In terms of biological role, core component of nucleosome. Nucleosomes wrap and compact DNA into chromatin, limiting DNA accessibility to the cellular machineries which require DNA as a template. Histones thereby play a central role in transcription regulation, DNA repair, DNA replication and chromosomal stability. DNA accessibility is regulated via a complex set of post-translational modifications of histones, also called histone code, and nucleosome remodeling. The polypeptide is Histone H2B.1, sperm (Psammechinus miliaris (Green sea urchin)).